The primary structure comprises 142 residues: Large ribosomal subunit protein uL11 (142 aa).

This sequence belongs to the universal ribosomal protein uL11 family. In terms of assembly, part of the ribosomal stalk of the 50S ribosomal subunit. Interacts with L10 and the large rRNA to form the base of the stalk. L10 forms an elongated spine to which L12 dimers bind in a sequential fashion forming a multimeric L10(L12)X complex. In terms of processing, one or more lysine residues are methylated.

In terms of biological role, forms part of the ribosomal stalk which helps the ribosome interact with GTP-bound translation factors. The protein is Large ribosomal subunit protein uL11 of Enterobacter sp. (strain 638).